The following is a 132-amino-acid chain: Large-conductance mechanosensitive channel (132 aa).

The next 3 membrane-spanning stretches (helical) occupy residues 14 to 34 (VVDLAVGVVIGAAFGKIVSSL), 38 to 58 (IITPLLGMVLGGVNFTDLHFG), and 67 to 87 (GNFIQTIFDFLIIAASIFMFI).

It belongs to the MscL family. In terms of assembly, homopentamer.

The protein resides in the cell membrane. Functionally, channel that opens in response to stretch forces in the membrane lipid bilayer. May participate in the regulation of osmotic pressure changes within the cell. This chain is Large-conductance mechanosensitive channel, found in Bacillus cereus (strain G9842).